Here is a 299-residue protein sequence, read N- to C-terminus: SET domain-containing protein 9 (299 aa).

Positions 122-295 (FSVAQATSSL…QGEELFSNYY (174 aa)) constitute an SET domain. Position 294 (Tyr-294) interacts with S-adenosyl-L-methionine.

Belongs to the class V-like SAM-binding methyltransferase superfamily.

This is SET domain-containing protein 9 (SETD9) from Homo sapiens (Human).